A 492-amino-acid polypeptide reads, in one-letter code: N-succinylglutamate 5-semialdehyde dehydrogenase (492 aa).

NAD(+) is bound at residue 220-225 (GSANTG). Catalysis depends on residues Glu-243 and Cys-277.

This sequence belongs to the aldehyde dehydrogenase family. AstD subfamily.

It catalyses the reaction N-succinyl-L-glutamate 5-semialdehyde + NAD(+) + H2O = N-succinyl-L-glutamate + NADH + 2 H(+). Its pathway is amino-acid degradation; L-arginine degradation via AST pathway; L-glutamate and succinate from L-arginine: step 4/5. Its function is as follows. Catalyzes the NAD-dependent reduction of succinylglutamate semialdehyde into succinylglutamate. The chain is N-succinylglutamate 5-semialdehyde dehydrogenase from Escherichia coli O9:H4 (strain HS).